Reading from the N-terminus, the 353-residue chain is Protein arginine N-methyltransferase 1 (353 aa).

Residues 32 to 353 (KDYYFDSYAH…LSCSTDYRMR (322 aa)) form the SAM-dependent MTase PRMT-type domain. Histidine 45, arginine 54, glycine 78, and glutamate 100 together coordinate S-adenosyl-L-methionine. Lysine 116 carries the post-translational modification N6-succinyllysine. Lysine 127 participates in a covalent cross-link: Glycyl lysine isopeptide (Lys-Gly) (interchain with G-Cter in ubiquitin). Glutamate 129 provides a ligand contact to S-adenosyl-L-methionine. Catalysis depends on residues glutamate 144 and glutamate 153. Residues lysine 210 and lysine 215 each carry the N6-acetyllysine modification. Residues serine 286 and serine 289 each carry the phosphoserine modification.

The protein belongs to the class I-like SAM-binding methyltransferase superfamily. Protein arginine N-methyltransferase family. In terms of assembly, homodimer and heterodimer with PRMT8. Homooctamer; individual homodimers associates to form a homooctamer. Interacts with NFATC2IP. Interacts with ILF3 and SUPT5H. Individual homodimers can associate to form a homohexamer. Interacts with FOXO1; the interaction methylates FOXO1, retaining it in the nucleus and increasing its transcriptional activity. Methylation of FOXO1 is increased with oxidative stress. Interacts with CHTOP; the interaction methylates CHTOP, enabling its interaction with the 5FMC complex. Interacts with BTG1, BTG2 and IFNAR1. Interacts with and probably methylates ATXN2L. Component of the methylosome, a 20S complex containing at least CLNS1A/pICln, PRMT5/SKB1, WDR77/MEP50, PRMT1 and ERH. Interacts with DHX9 (via RGG region). Interacts (via N-terminus) with HABP4. Interacts with MAP3K5/ASK1; the interaction results in MAP3K5 methylation by PRMT1 which inhibits MAP3K5 activation. Interacts with TRIM48; the interaction results in ubiquitination of PRMT1 by TRIM48, leading to PRMT1 proteasomal degradation and activation of MAP3K5. Interacts with GATOR1 complex; this interaction is S-adenosyl-L-methionine (SAM) dependent and is perturbated by SAMTOR in a SAM-sensitive manner. Interacts with GFI1; promoting recognition and binding of MRE11 and TP53BP1 substrates by PRMT1. Post-translationally, polyubiquitinated at Lys-127 by the SCF(FBXL17) complex, leading to its subsequent degradation. Ubiquitination is regulated by acetylation at Lys-210 and Lys-215. Polyubiquitinated by E3 ubiquitin-protein ligase TRIM48, leading to suppression of MAP3K5/ASK1 methylation and subsequent MAP3K5 activation. In terms of processing, acetylation at Lys-210 and Lys-215 regulates ubiquitination by the SCF(FBXL17) complex. Acetylated at Lys-215 by p300/EP300. Deacetylated at Lys-210 and Lys-215 by SIRT1. Ubiquitous.

It localises to the nucleus. Its subcellular location is the nucleoplasm. The protein resides in the cytoplasm. It is found in the cytosol. The protein localises to the lysosome membrane. The catalysed reaction is L-arginyl-[protein] + 2 S-adenosyl-L-methionine = N(omega),N(omega)-dimethyl-L-arginyl-[protein] + 2 S-adenosyl-L-homocysteine + 2 H(+). It catalyses the reaction L-arginyl-[protein] + S-adenosyl-L-methionine = N(omega)-methyl-L-arginyl-[protein] + S-adenosyl-L-homocysteine + H(+). It carries out the reaction N(omega)-methyl-L-arginyl-[protein] + S-adenosyl-L-methionine = N(omega),N(omega)-dimethyl-L-arginyl-[protein] + S-adenosyl-L-homocysteine + H(+). Its function is as follows. Arginine methyltransferase that methylates (mono and asymmetric dimethylation) the guanidino nitrogens of arginyl residues present in proteins such as ESR1, histone H2, H3 and H4, FMR1, ILF3, HNRNPA1, HNRNPD, NFATC2IP, SUPT5H, TAF15, EWS, HABP4, SERBP1, RBM15, FOXO1, CHTOP, MAP3K5/ASK1 and MICU1. Constitutes the main enzyme that mediates monomethylation and asymmetric dimethylation of histone H4 'Arg-3' (H4R3me1 and H4R3me2a, respectively), a specific tag for epigenetic transcriptional activation. May be involved in the regulation of TAF15 transcriptional activity, act as an activator of estrogen receptor (ER)-mediated transactivation, play a key role in neurite outgrowth and act as a negative regulator of megakaryocytic differentiation, by modulating p38 MAPK pathway. Methylates RBM15, promoting ubiquitination and degradation of RBM15. Methylates MRE11 and TP53BP1, promoting the DNA damage response. Methylates FOXO1 and retains it in the nucleus increasing its transcriptional activity. Methylates CHTOP and this methylation is critical for its 5-hydroxymethylcytosine (5hmC)-binding activity. Methylates MAP3K5/ASK1 at 'Arg-85' and 'Arg-87' which promotes association of MAP3K5 with thioredoxin and negatively regulates MAP3K5 association with TRAF2, inhibiting MAP3K5 stimulation and MAP3K5-induced activation of JNK. Methylates H4R3 in genes involved in glioblastomagenesis in a CHTOP- and/or TET1-dependent manner. Plays a role in regulating alternative splicing in the heart. Methylates NPRL2 at 'Arg-78' leading to inhibition of its GTPase activator activity and then the GATOR1 complex and consequently inducing timely mTORC1 activation under methionine-sufficient conditions. In Rattus norvegicus (Rat), this protein is Protein arginine N-methyltransferase 1.